Reading from the N-terminus, the 167-residue chain is N-alpha-acetyltransferase (167 aa).

The 156-residue stretch at 12-167 folds into the N-acetyltransferase domain; the sequence is FTLRNARMDD…EDAYLMARPL (156 aa). Substrate is bound at residue tyrosine 37. Position 88 (histidine 88) interacts with Zn(2+). Acetyl-CoA contacts are provided by residues 92 to 94 and 100 to 105; these read IAV and RKGIAT. Glutamate 127 contributes to the Zn(2+) binding site. Residues asparagine 132 and 139–141 contribute to the acetyl-CoA site; that span reads YEK. Tyrosine 154 is a substrate binding site.

This sequence belongs to the acetyltransferase family. ARD1 subfamily. In terms of assembly, homodimer.

The protein localises to the cytoplasm. The enzyme catalyses N-terminal L-alanyl-[protein] + acetyl-CoA = N-terminal N(alpha)-acetyl-L-alanyl-[protein] + CoA + H(+). It carries out the reaction N-terminal L-seryl-[protein] + acetyl-CoA = N-terminal N(alpha)-acetyl-L-seryl-[protein] + CoA + H(+). It catalyses the reaction N-terminal L-methionyl-L-leucyl-[protein] + acetyl-CoA = N-terminal N(alpha)-acetyl-L-methionyl-L-leucyl-[protein] + CoA + H(+). The catalysed reaction is N-terminal L-methionyl-L-glutamyl-[protein] + acetyl-CoA = N-terminal N(alpha)-acetyl-L-methionyl-L-glutamyl-[protein] + CoA + H(+). Displays alpha (N-terminal) acetyltransferase activity. Catalyzes the covalent attachment of an acetyl moiety from acetyl-CoA to the free alpha-amino group at the N-terminus of a protein. NAT is able to acetylate the alpha-amino group of methionine, alanine and serine N-terminal residue substrates, however it has a preference for Ser-N-terminal substrates. In Saccharolobus solfataricus (strain ATCC 35092 / DSM 1617 / JCM 11322 / P2) (Sulfolobus solfataricus), this protein is N-alpha-acetyltransferase.